Reading from the N-terminus, the 212-residue chain is External core antigen (212 aa).

Positions 1–19 (MQLFHLCLIISCSCPTVQA) are cleaved as a signal peptide. Residues 25–27 (GWL) are HBEAG. The disordered stretch occupies residues 179-212 (RQRGRTIRRRTPSPRRRRSQSPRRRRSQSRESQC). The span at 180 to 205 (QRGRTIRRRTPSPRRRRSQSPRRRRS) shows a compositional bias: basic residues. The stretch at 184-190 (TIRRRTP) is one 1; half-length repeat. The 3 X 8 AA repeats of S-P-R-R-R-R-S-Q stretch occupies residues 184 to 206 (TIRRRTPSPRRRRSQSPRRRRSQ). The propeptide occupies 184 to 212 (TIRRRTPSPRRRRSQSPRRRRSQSRESQC). Repeat copies occupy residues 191-198 (SPRRRRSQ) and 199-206 (SPRRRRSQ).

It belongs to the orthohepadnavirus precore antigen family. Homodimerizes. Post-translationally, phosphorylated. Cleaved by host furin.

Its subcellular location is the secreted. It localises to the host nucleus. Functionally, may regulate immune response to the intracellular capsid in acting as a T-cell tolerogen, by having an immunoregulatory effect which prevents destruction of infected cells by cytotoxic T-cells. This immune regulation may predispose to chronicity during perinatal infections and prevent severe liver injury during adult infections. This chain is External core antigen, found in Hepatitis B virus genotype D subtype ayw (isolate Australia/AustKW/1991) (HBV-D).